Reading from the N-terminus, the 710-residue chain is WD repeat-containing protein CG11141 (710 aa).

WD repeat units follow at residues 31 to 70 (FFPA…MQKL) and 133 to 172 (LHKC…HLSK). The segment at 283–307 (LNPKQRSEPSGTHHTSASTSSTRHS) is disordered. Residues 292–307 (SGTHHTSASTSSTRHS) show a composition bias toward low complexity. A Phosphothreonine modification is found at Thr-488. Phosphoserine is present on Ser-553. Disordered stretches follow at residues 612 to 635 (ASIQ…GEPV) and 685 to 710 (DPLA…FLDN). Polar residues-rich tracts occupy residues 613–624 (SIQTSSRENATN) and 694–704 (PATSDSNTSSE).

This sequence belongs to the WD repeat KIAA0329 family.

The sequence is that of WD repeat-containing protein CG11141 from Drosophila melanogaster (Fruit fly).